The sequence spans 128 residues: MKRHEAREKAIQTLFQIEVSKLEVDEAIEFALDGEESDPFYEQLVTGTLEHIEDIDALLVENLKNWRLDRLGNVERTILRMATFELLYVETIPENVTINEAVELAKSFGDEEAGKLVNGVLGNIIKED.

This sequence belongs to the NusB family.

Its function is as follows. Involved in transcription antitermination. Required for transcription of ribosomal RNA (rRNA) genes. Binds specifically to the boxA antiterminator sequence of the ribosomal RNA (rrn) operons. The chain is Transcription antitermination protein NusB from Exiguobacterium sp. (strain ATCC BAA-1283 / AT1b).